Consider the following 295-residue polypeptide: Nucleotide-binding protein Sare_3328 (295 aa).

19–26 (GVSGGGRS) is an ATP binding site. Position 70–73 (70–73 (DVRS)) interacts with GTP.

It belongs to the RapZ-like family.

Its function is as follows. Displays ATPase and GTPase activities. This Salinispora arenicola (strain CNS-205) protein is Nucleotide-binding protein Sare_3328.